A 769-amino-acid polypeptide reads, in one-letter code: Gephyrin (769 aa).

An MPT Mo-transferase region spans residues 14–153 (QIRVGVLTVS…LPGSKKGSQE (140 aa)). Residues 140 to 349 (LIINLPGSKK…VDITKVARRH (210 aa)) are interaction with GABARAP. Disordered stretches follow at residues 181–232 (DELE…DSSS) and 260–299 (TASLSTTPSESPRAQATSRLSTASCPTPKQIRRPDESKGV). The span at 187 to 199 (PSPPPPLSPPPTT) shows a compositional bias: pro residues. Phosphoserine is present on residues Ser-188 and Ser-194. At Thr-198 the chain carries Phosphothreonine. A Phosphoserine modification is found at Ser-200. The S-palmitoyl cysteine moiety is linked to residue Cys-212. Residues 261-286 (ASLSTTPSESPRAQATSRLSTASCPT) are compositionally biased toward polar residues. Ser-262 carries the post-translational modification Phosphoserine. Thr-265 and Thr-266 each carry phosphothreonine. 2 positions are modified to phosphoserine: Ser-268 and Ser-270. Cys-284 carries the S-palmitoyl cysteine lipid modification. The MPT adenylyltransferase stretch occupies residues 327 to 769 (SSKENILRAS…VVDVMVIGRL (443 aa)). A Phosphoserine modification is found at Ser-338.

The protein in the N-terminal section; belongs to the MoaB/Mog family. It in the C-terminal section; belongs to the MoeA family. Homotrimer, homodimer and homooligomer. Interacts with SRGAP2 (via SH3 domain). Interacts with GLRB. Interacts with GABARAP. Interacts with GABRA3. GABRA3 and GLRB occupy overlapping binding sites. Interacts with ARHGAP32; IQSEC3, INSYN1 and INSYN2A. Requires Mg(2+) as cofactor. Post-translationally, palmitoylated. Palmitoylation is stimulated by GABA type A receptors activity. Palmitoylation by ZDHHC12 regulates clustering at synapses.

The protein resides in the postsynaptic cell membrane. It localises to the cell membrane. Its subcellular location is the cytoplasm. It is found in the cytosol. The protein localises to the cytoskeleton. The protein resides in the cell projection. It localises to the dendrite. Its subcellular location is the postsynaptic density. The catalysed reaction is molybdopterin + ATP + H(+) = adenylyl-molybdopterin + diphosphate. It catalyses the reaction adenylyl-molybdopterin + molybdate = Mo-molybdopterin + AMP + H(+). Its pathway is cofactor biosynthesis; molybdopterin biosynthesis. Inhibited by copper and tungsten. Microtubule-associated protein involved in membrane protein-cytoskeleton interactions. It is thought to anchor the inhibitory glycine receptor (GLYR) to subsynaptic microtubules. Acts as a major instructive molecule at inhibitory synapses, where it also clusters GABA type A receptors. Its function is as follows. Also has a catalytic activity and catalyzes two steps in the biosynthesis of the molybdenum cofactor. In the first step, molybdopterin is adenylated. Subsequently, molybdate is inserted into adenylated molybdopterin and AMP is released. The protein is Gephyrin (Gphn) of Mus musculus (Mouse).